The following is a 129-amino-acid chain: MPTYNQLVRFGRKSKTRKSKSPALESNPFKSGVCLVVKTVTPKKPNSALRKIATVRLSNKRTVNAYIPGEKHSVKEHDRVLVRGGQVPDLPGVKYHIVLGAYDISGVKGRKQGRSRYGAPCKQIAVTKK.

A 3-methylthioaspartic acid modification is found at Asp89.

Belongs to the universal ribosomal protein uS12 family. As to quaternary structure, part of the 30S ribosomal subunit. Contacts proteins S8 and S17. May interact with IF1 in the 30S initiation complex.

With S4 and S5 plays an important role in translational accuracy. In terms of biological role, interacts with and stabilizes bases of the 16S rRNA that are involved in tRNA selection in the A site and with the mRNA backbone. Located at the interface of the 30S and 50S subunits, it traverses the body of the 30S subunit contacting proteins on the other side and probably holding the rRNA structure together. The combined cluster of proteins S8, S12 and S17 appears to hold together the shoulder and platform of the 30S subunit. In Rickettsia akari (strain Hartford), this protein is Small ribosomal subunit protein uS12.